The following is a 97-amino-acid chain: Acylphosphatase (97 aa).

Positions 11 to 97 (TYYVRVRGTV…EKRYERFEQH (87 aa)) constitute an Acylphosphatase-like domain. Catalysis depends on residues Arg-26 and Asn-44. The tract at residues 76-97 (RVTEVSGEERSTEKRYERFEQH) is disordered. Positions 82 to 97 (GEERSTEKRYERFEQH) are enriched in basic and acidic residues.

The protein belongs to the acylphosphatase family.

The catalysed reaction is an acyl phosphate + H2O = a carboxylate + phosphate + H(+). This is Acylphosphatase (acyP) from Paraburkholderia xenovorans (strain LB400).